A 188-amino-acid chain; its full sequence is Elongation factor P (188 aa).

Belongs to the elongation factor P family.

Its subcellular location is the cytoplasm. The protein operates within protein biosynthesis; polypeptide chain elongation. Its function is as follows. Involved in peptide bond synthesis. Stimulates efficient translation and peptide-bond synthesis on native or reconstituted 70S ribosomes in vitro. Probably functions indirectly by altering the affinity of the ribosome for aminoacyl-tRNA, thus increasing their reactivity as acceptors for peptidyl transferase. This chain is Elongation factor P, found in Rickettsia bellii (strain OSU 85-389).